Consider the following 4218-residue polypeptide: Protein Obscurin (4218 aa).

The SH3 domain occupies 3–71 (AVADIVFVSR…PIDILEFNPT (69 aa)). The DH domain maps to 86–264 (RKLTILRELV…LSVPSRAYDN (179 aa)). Positions 439–466 (SKETKERLQHEQQELLKLEQEAIELYKK) form a coiled coil. Disordered regions lie at residues 465–592 (KKQQ…SHSK), 684–703 (SLRDGDTAPAGGSPGRQQGY), 728–750 (SGANQHLQQSGPPPPPIPPNFTR), and 923–1010 (RYET…EDRP). Composition is skewed to low complexity over residues 466–490 (KQQSSKSVSSKTESVEITSSQVKSS) and 505–517 (AQVKEVTPVKVVS). Basic and acidic residues predominate over residues 578-592 (KEVRKEVPPSASHSK). Residues 923 to 935 (RYETKTRDYDRGT) show a composition bias toward basic and acidic residues. Polar residues predominate over residues 936–948 (SYDSTVERSQYGI). Basic and acidic residues-rich tracts occupy residues 950–962 (SRRDRSSVDKVEA) and 972–986 (TESRAASRAESRAES). Residues 987–996 (RASYSVAESR) show a composition bias toward low complexity. 15 consecutive Ig-like C2-type domains span residues 1017–1103 (PVVV…TTVS), 1152–1298 (PRVK…AELS), 1313–1400 (PTLV…SSIN), 1504–1594 (PVIV…TQLL), 1599–1689 (PEFT…CVVT), 1694–1785 (PKVK…CKVA), 1815–1906 (PEIV…LSLS), 2018–2107 (PEIS…FNLA), 2113–2214 (PTFI…FKLA), 2220–2305 (PSFV…EKVA), 2318–2409 (PKFL…VEIV), 2415–2505 (PVFV…AKLY), 2519–2609 (PQFV…ANVR), 2614–2698 (PPVF…KDIT), and 2716–2792 (PPVF…SCRI). The cysteines at positions 1199 and 1282 are disulfide-linked. C2739 and C2790 form a disulfide bridge. The Fibronectin type-III 1 domain maps to 2832–2933 (APPPLSEGPI…TYRQKLVPDP (102 aa)). The 255-residue stretch at 3186-3440 (YDIGDELGRG…VKTALKHPWF (255 aa)) folds into the Protein kinase 1 domain. ATP contacts are provided by G3198, K3215, E3260, A3262, E3266, K3310, and D3326. Residues 3654–3738 (PFFREKPQTI…ARNKVGQTVA (85 aa)) form the Ig-like C2-type 16 domain. The region spanning 3750-3843 (APDSPEISAN…IPVSASTVGG (94 aa)) is the Fibronectin type-III 2 domain. Residues 3897–4151 (YSFISEIARG…TEDCLEHRWL (255 aa)) form the Protein kinase 2 domain.

The protein belongs to the protein kinase superfamily. CAMK Ser/Thr protein kinase family. As to quaternary structure, interacts with myosin. May interact (via protein kinase domain 1) with ball. May interact (via protein kinase domain 1 or 2) with mask. May interact (via protein kinase domain 2) with Tm1/tropomyosin-1. Expressed in the thoracic muscles including the indirect flight muscles (IFM) (at protein level).

It is found in the cytoplasm. Its subcellular location is the myofibril. It localises to the sarcomere. The protein localises to the m line. Structural component of the muscle M line which is involved in assembly and organization of sarcomere. Required for the development and organization of indirect flight muscle sarcomeres by regulating the formation of M line and H zone and the correct assembly of thick and thin filaments in the sarcomere. Lacks serine/threonine-protein kinase activity. The protein is Protein Obscurin of Drosophila melanogaster (Fruit fly).